The following is a 31-amino-acid chain: Cyclotide mden-L (31 aa).

A cross-link (cyclopeptide (Gly-Asn)) is located at residues 1–31; sequence GSIPCGESCVYIPCISAVLGCSCKNKVCYRN. Intrachain disulfides connect Cys-5/Cys-21, Cys-9/Cys-23, and Cys-14/Cys-28.

It belongs to the cyclotide family. Bracelet subfamily. Post-translationally, this is a cyclic peptide.

Its function is as follows. Probably participates in a plant defense mechanism. The polypeptide is Cyclotide mden-L (Melicytus dentatus (Tree violet)).